Consider the following 206-residue polypeptide: U-scoloptoxin(08)-Cw1a (206 aa).

The first 24 residues, 1 to 24, serve as a signal peptide directing secretion; sequence MIFRVNLLFSCFCFVLFVFDFSNA. Residues 25-164 constitute a propeptide that is removed on maturation; the sequence is SKYDQGSLNI…DLPELKRRKR (140 aa). Residues 37–43 form an RLWRNWE 1; approximate repeat; that stretch reads RLWRDWE. An RLWRNWE 2; approximate repeat occupies 71–77; sequence RLWRDWE. The stretch at 104–110 is one RLWRNWE 3; approximate repeat; the sequence is RLWRDWE. The stretch at 137-143 is one RLWRNWE 4 repeat; that stretch reads RLWRNWE. An RLWRNWE 5; approximate repeat occupies 164 to 170; the sequence is RLWRNED.

The protein belongs to the scoloptoxin-08 family. Contains 3 disulfide bonds. In terms of tissue distribution, expressed by the venom gland.

The protein resides in the secreted. This Cormocephalus westwoodi (Westwood's green centipede) protein is U-scoloptoxin(08)-Cw1a.